We begin with the raw amino-acid sequence, 783 residues long: Probable phosphoketolase (783 aa).

It belongs to the XFP family. Thiamine diphosphate serves as cofactor.

This Rhodopseudomonas palustris (strain TIE-1) protein is Probable phosphoketolase.